The sequence spans 1243 residues: Probable phospholipid-transporting ATPase 7 (1243 aa).

Residues 1–74 are Cytoplasmic-facing; it reads MGRRRIRSRI…TTRYNLITFL (74 aa). A helical transmembrane segment spans residues 75-96; that stretch reads PKCLYEQFHRVANFYFLVAAIL. Residues 97–100 lie on the Extracellular side of the membrane; that stretch reads SVFP. Residues 101 to 123 form a helical membrane-spanning segment; sequence LSPFNKWSMIAPLIFVVGLSMGK. Topologically, residues 124-305 are cytoplasmic; the sequence is EALEDWRRFM…SRIEKRMDYI (182 aa). A helical transmembrane segment spans residues 306–327; the sequence is IYTLFALLVLVSFISSLGFAVM. Residues 328 to 359 lie on the Extracellular side of the membrane; that stretch reads TKMHMGDWWYLRPDKPERLTNPRNPFHAWVVH. A helical membrane pass occupies residues 360 to 377; it reads LITAVLLYGYLIPISLYV. At 378 to 941 the chain is on the cytoplasmic side; sequence SIELVKVLQA…HGHWCYKRIA (564 aa). The active-site 4-aspartylphosphate intermediate is Asp425. Lys623 participates in a covalent cross-link: Glycyl lysine isopeptide (Lys-Gly) (interchain with G-Cter in ubiquitin). Positions 886 and 890 each coordinate Mg(2+). A helical transmembrane segment spans residues 942–961; it reads QMICYFFYKNITFGLTLFYF. The Extracellular segment spans residues 962–975; it reads EAFTGFSGQAIYND. A helical membrane pass occupies residues 976-995; it reads SYLLLFNVILTSLPVIALGV. Topologically, residues 996–1025 are cytoplasmic; sequence FEQDVSSEVCLQFPALYQQGPKNLFFDWYR. The chain crosses the membrane as a helical span at residues 1026-1048; sequence IIGWMANGVYASVVIFSLNIGIF. Topologically, residues 1049 to 1061 are extracellular; sequence HVQSFCSGGQTAD. Residues 1062–1084 traverse the membrane as a helical segment; the sequence is MDAMGTAMFTCIIWAVNVQIALT. Residues 1085 to 1090 are Cytoplasmic-facing; sequence MSHFTW. The helical transmembrane segment at 1091–1111 threads the bilayer; that stretch reads IQHVLIWGSIVTWYIFLALFG. At 1112-1128 the chain is on the extracellular side; sequence MLPPKVSGNIFHMLSET. The chain crosses the membrane as a helical span at residues 1129–1153; that stretch reads LAPAPIFWLTSLLVIAATTLPYLAY. The Cytoplasmic portion of the chain corresponds to 1154 to 1243; the sequence is ISFQRSLNPL…TDTTSTTQHS (90 aa).

Belongs to the cation transport ATPase (P-type) (TC 3.A.3) family. Type IV subfamily.

It localises to the cell membrane. The protein resides in the endomembrane system. It carries out the reaction ATP + H2O + phospholipidSide 1 = ADP + phosphate + phospholipidSide 2.. Involved in transport of phospholipids and in regulation of pollen plasma membrane lipid asymmetry. The chain is Probable phospholipid-transporting ATPase 7 from Arabidopsis thaliana (Mouse-ear cress).